A 365-amino-acid chain; its full sequence is Probable 7-methylxanthine methyltransferase 3 (365 aa).

Residue Y18 participates in S-adenosyl-L-homocysteine binding. A theobromine-binding site is contributed by T25. Residues C62, Q67, D99, L100, S132, and F133 each contribute to the S-adenosyl-L-homocysteine site. Theobromine contacts are provided by Y150, H153, and W154. 3 residues coordinate Mg(2+): N170, F258, and N259. A theobromine-binding site is contributed by F311.

This sequence belongs to the methyltransferase superfamily. Type-7 methyltransferase family. It depends on Mg(2+) as a cofactor.

The catalysed reaction is 7-methylxanthine + S-adenosyl-L-methionine = theobromine + S-adenosyl-L-homocysteine + H(+). The protein operates within alkaloid biosynthesis. Its function is as follows. Involved in the biosynthesis of theobromine. This chain is Probable 7-methylxanthine methyltransferase 3, found in Theobroma cacao (Cacao).